The chain runs to 443 residues: Threonine/serine transporter TdcC (443 aa).

Transmembrane regions (helical) follow at residues 22–42, 44–64, 97–117, 140–160, 163–183, 207–227, 261–281, 319–339, 366–386, 389–409, and 423–443; these read TTWTLGLFGTAIGAGVLFFPI, AGFGGLIPILLMLVLAYPIAF, GVVITFLYFFAICPLLWIYGV, FVALFLLLLMAFVIWFGKDLM, VMSYLVWPFIASLVLISLSLI, ILVTVWLGISIMVFSFNFSPI, MLMVAVVMFFAFSCLFTLSPA, ASIIALVAIFKSFFGHYLGTL, ISMIFIMGSTWVVAYANPNIL, IEAMGAPIIASLLCLLPMYAI, and DNVFVTVIGLLTILNIVYKLF.

The protein belongs to the amino acid/polyamine transporter 2 family. SdaC/TdcC subfamily.

The protein resides in the cell inner membrane. The catalysed reaction is L-threonine(in) + H(+)(in) = L-threonine(out) + H(+)(out). It catalyses the reaction L-serine(in) + H(+)(in) = L-serine(out) + H(+)(out). In terms of biological role, involved in the import of threonine and serine into the cell, with the concomitant import of a proton (symport system). The sequence is that of Threonine/serine transporter TdcC from Citrobacter koseri (strain ATCC BAA-895 / CDC 4225-83 / SGSC4696).